The following is a 345-amino-acid chain: MNNWVTTYENHNYGLVISSRIRLARNLAKIPFSHKLNIEESKKVIKNVENAFYTFSNTEEKFKSNYLWDKNDNEKNIYLEKHLISKNLIDNSSKAAFILDDKETISIMINEEDHVRIQCITGGLNLEEVYDVSEKIDDLLEENLEYAFDEKLGYLTACPTNVGTGLRASVMLHLPSLSLNNQINGFLNALAQVGMTIRGLYGEGSKAIGNIYQISNQVTLGRSEEEILSNLKALVLQIINQEIISRENLMKKYKYELEDKIYRALGVLKSAVLLNSSECLKLLSDVRLGVEMGIIKDVNGITLNKLLVESQPATIQKIYGESLSNKDRDFNRAKFVREKLAVNTA.

One can recognise a Phosphagen kinase C-terminal domain in the interval 15-245; that stretch reads LVISSRIRLA…LQIINQEIIS (231 aa). ATP is bound by residues 18-22, histidine 82, arginine 116, 167-171, and 198-203; these read SSRIR, RASVM, and RGLYGE. An RDXXRA motif of the pArg binding pocket involved in allosteric regulation motif is present at residues 328-333; the sequence is RDFNRA.

This sequence belongs to the ATP:guanido phosphotransferase family.

The enzyme catalyses L-arginyl-[protein] + ATP = N(omega)-phospho-L-arginyl-[protein] + ADP + H(+). Its activity is regulated as follows. Appears to be allosterically activated by the binding of pArg-containing polypeptides to the pArg-binding pocket localized in the C-terminal domain of McsB. Its function is as follows. Catalyzes the specific phosphorylation of arginine residues in proteins. The polypeptide is Protein-arginine kinase (Clostridium kluyveri (strain NBRC 12016)).